A 278-amino-acid polypeptide reads, in one-letter code: Purine nucleoside phosphorylase YlmD (278 aa).

Positions 87, 132, and 149 each coordinate Zn(2+).

This sequence belongs to the purine nucleoside phosphorylase YfiH/LACC1 family. In terms of assembly, homodimer. Cu(2+) is required as a cofactor. Zn(2+) serves as cofactor.

The enzyme catalyses adenosine + phosphate = alpha-D-ribose 1-phosphate + adenine. It catalyses the reaction S-methyl-5'-thioadenosine + phosphate = 5-(methylsulfanyl)-alpha-D-ribose 1-phosphate + adenine. The catalysed reaction is inosine + phosphate = alpha-D-ribose 1-phosphate + hypoxanthine. It carries out the reaction adenosine + H2O + H(+) = inosine + NH4(+). Its function is as follows. Purine nucleoside enzyme that catalyzes the phosphorolysis of adenosine and inosine nucleosides, yielding D-ribose 1-phosphate and the respective free bases, adenine and hypoxanthine. Also catalyzes the phosphorolysis of S-methyl-5'-thioadenosine into adenine and S-methyl-5-thio-alpha-D-ribose 1-phosphate. Also has adenosine deaminase activity. This Bacillus subtilis (strain 168) protein is Purine nucleoside phosphorylase YlmD (ylmD).